A 341-amino-acid chain; its full sequence is Glycerol-3-phosphate dehydrogenase [NAD(P)+] (341 aa).

NADPH contacts are provided by Ser-14, Phe-15, Arg-35, and Lys-108. Residues Lys-108 and Gly-136 each contribute to the sn-glycerol 3-phosphate site. Ala-140 contributes to the NADPH binding site. Positions 191, 244, 254, 255, and 256 each coordinate sn-glycerol 3-phosphate. The active-site Proton acceptor is the Lys-191. Arg-255 provides a ligand contact to NADPH. The NADPH site is built by Val-279 and Glu-281.

The protein belongs to the NAD-dependent glycerol-3-phosphate dehydrogenase family.

Its subcellular location is the cytoplasm. The enzyme catalyses sn-glycerol 3-phosphate + NAD(+) = dihydroxyacetone phosphate + NADH + H(+). It carries out the reaction sn-glycerol 3-phosphate + NADP(+) = dihydroxyacetone phosphate + NADPH + H(+). The protein operates within membrane lipid metabolism; glycerophospholipid metabolism. Its function is as follows. Catalyzes the reduction of the glycolytic intermediate dihydroxyacetone phosphate (DHAP) to sn-glycerol 3-phosphate (G3P), the key precursor for phospholipid synthesis. This Pseudomonas putida (strain ATCC 700007 / DSM 6899 / JCM 31910 / BCRC 17059 / LMG 24140 / F1) protein is Glycerol-3-phosphate dehydrogenase [NAD(P)+].